The sequence spans 120 residues: Seripauperin-20 (120 aa).

Residues 7–25 (IAAGVAAIAAGASATTTLA) form a helical membrane-spanning segment.

The protein belongs to the SRP1/TIP1 family. Seripauperin subfamily.

It localises to the membrane. The chain is Seripauperin-20 (PAU20) from Saccharomyces cerevisiae (strain ATCC 204508 / S288c) (Baker's yeast).